The primary structure comprises 591 residues: Probable translation initiation factor IF-2 (591 aa).

Residues 7–223 form the tr-type G domain; the sequence is LRTPIVCVMG…LLGLAQRFLE (217 aa). The segment at 16–23 is G1; that stretch reads GHVDHGKT. GTP is bound at residue 16–23; sequence GHVDHGKT. Positions 41–45 are G2; that stretch reads AITQH. Positions 78–81 are G3; sequence DTPG. GTP-binding positions include 78–82 and 132–135; these read DTPGH and NKID. The G4 stretch occupies residues 132 to 135; it reads NKID. Positions 200-202 are G5; the sequence is SAI.

This sequence belongs to the TRAFAC class translation factor GTPase superfamily. Classic translation factor GTPase family. IF-2 subfamily.

Function in general translation initiation by promoting the binding of the formylmethionine-tRNA to ribosomes. Seems to function along with eIF-2. This is Probable translation initiation factor IF-2 from Methanococcoides burtonii (strain DSM 6242 / NBRC 107633 / OCM 468 / ACE-M).